A 566-amino-acid polypeptide reads, in one-letter code: Peroxisomal leader peptide-processing protease (566 aa).

The segment at 319-531 (ALAALLPPEV…LQPALQQYSQ (213 aa)) is serine protease. Catalysis depends on charge relay system residues His372, Asp408, and Ser481.

This sequence belongs to the peptidase S1B family. As to quaternary structure, homodimer. Forms a heterodimer with the C-terminal cleavage product (45 kDa form). Forms a heterodimer with the N-terminal cleavage product (15 kDa form). Interacts with PEX5. Interacts with LONP2. Self-cleavage gives rise to an N-terminal 15-kDa fragment and C-terminal 45-kDa fragment upon import into the peroxisomes. The full-lengh TYSND1 is the active the proteolytic processing of PTS1- and PTS2-proteins and in self-cleavage, and intermolecular self-cleavage of TYSND1 down-regulates its protease activity.

The protein localises to the peroxisome. Peroxisomal protease that mediates both the removal of the leader peptide from proteins containing a PTS2 target sequence and processes several PTS1-containing proteins. Catalyzes the processing of PTS1-proteins involved in the peroxisomal beta-oxidation of fatty acids. This is Peroxisomal leader peptide-processing protease (TYSND1) from Homo sapiens (Human).